Consider the following 721-residue polypeptide: Protein quick-to-court (721 aa).

Disordered stretches follow at residues 1 to 42, 143 to 210, 360 to 379, 393 to 428, and 441 to 471; these read MMTS…RIPH, VGNS…ASVA, SSPE…EAEL, DEGN…MQSS, and SSVH…CGAG. Basic and acidic residues predominate over residues 17 to 31; that stretch reads QVQREKDNDSAEDSH. Residues 161 to 201 show a composition bias toward low complexity; that stretch reads NGGSDISSSGTSSSSSNNKESSPRTTRTPRTPQTPQTPQTP. Over residues 362 to 379 the composition is skewed to basic and acidic residues; sequence PEERSASSDAVTVREAEL. Residues 406-420 show a composition bias toward low complexity; it reads RQQQQQANHSLQAMQ. Residues 441–454 show a composition bias toward polar residues; that stretch reads SSVHSKDSQTQSEA. A coiled-coil region spans residues 511-569; the sequence is KRSHNDKVEALLQKLAECNTRYSDMVPDYEQAKQRIRELEKQLEDLQRKLIEHEEKQNK. Residues 668–716 enclose the GRIP domain; that stretch reads HVDPEVTLQFLKSAIFYFLTDKENSQGHLQAIESILEFTDAEKQKISAA.

Expressed in the third antennal segment and the maxillary palp, with increased expression near the cuticle of both olfactory organs. Also detected in the second antenna segment. In the brain, expressed in the central nervous system, with high levels of expression in the visual system including the retina and optic lobe, and uniform expression in the cortex. Detected in the thorax and abdomen, with increased expression in the ventral ganglion. In males, detected in the reproductive tract including the ejaculatory bulb and testis.

In terms of biological role, in adult males, modulates sexual behavior by playing a role in sex discrimination and maintaining normal levels of sexual activity towards both males and females. The chain is Protein quick-to-court from Drosophila melanogaster (Fruit fly).